A 302-amino-acid polypeptide reads, in one-letter code: Glutaminase (302 aa).

Positions 61, 111, 155, 162, 186, 238, and 256 each coordinate substrate.

It belongs to the glutaminase family. As to quaternary structure, homotetramer.

The enzyme catalyses L-glutamine + H2O = L-glutamate + NH4(+). The sequence is that of Glutaminase from Pseudomonas paraeruginosa (strain DSM 24068 / PA7) (Pseudomonas aeruginosa (strain PA7)).